Reading from the N-terminus, the 94-residue chain is Acylphosphatase (94 aa).

The region spanning Arg3 to Tyr90 is the Acylphosphatase-like domain. Residues Arg18 and Asn36 contribute to the active site.

This sequence belongs to the acylphosphatase family.

The enzyme catalyses an acyl phosphate + H2O = a carboxylate + phosphate + H(+). The chain is Acylphosphatase (acyP) from Geobacillus kaustophilus (strain HTA426).